The primary structure comprises 197 residues: Imidazoleglycerol-phosphate dehydratase (197 aa).

The protein belongs to the imidazoleglycerol-phosphate dehydratase family.

The protein resides in the cytoplasm. The enzyme catalyses D-erythro-1-(imidazol-4-yl)glycerol 3-phosphate = 3-(imidazol-4-yl)-2-oxopropyl phosphate + H2O. It participates in amino-acid biosynthesis; L-histidine biosynthesis; L-histidine from 5-phospho-alpha-D-ribose 1-diphosphate: step 6/9. The polypeptide is Imidazoleglycerol-phosphate dehydratase (Laribacter hongkongensis (strain HLHK9)).